Reading from the N-terminus, the 230-residue chain is Probable thioesterase YBR096W (230 aa).

Belongs to the lcsJ thioesterase family.

In Saccharomyces cerevisiae (strain ATCC 204508 / S288c) (Baker's yeast), this protein is Probable thioesterase YBR096W.